Reading from the N-terminus, the 475-residue chain is UDP-glycosyltransferase 84A4 (475 aa).

His-20 (proton acceptor) is an active-site residue. His-20 contributes to the an anthocyanidin binding site. Gln-342, His-357, Trp-360, Asn-361, Ser-362, and Glu-365 together coordinate UDP-alpha-D-glucose. Residue Gly-380 coordinates an anthocyanidin. Residues Asp-381 and Gln-382 each coordinate UDP-alpha-D-glucose.

It belongs to the UDP-glycosyltransferase family.

The enzyme catalyses (E)-4-coumarate + UDP-alpha-D-glucose = 4-O-(beta-D-glucosyl)-trans-4-coumarate + UDP + H(+). The catalysed reaction is (E)-ferulate + UDP-alpha-D-glucose = 1-O-[(E)-feruloyl]-beta-D-glucose + UDP. It carries out the reaction (E)-caffeate + UDP-alpha-D-glucose = 1-O-[(E)-caffeoyl]-beta-D-glucose + UDP. It catalyses the reaction (E)-sinapate + UDP-alpha-D-glucose = 1-O-(trans-sinapoyl)-beta-D-glucose + UDP. The enzyme catalyses (E)-cinnamate + UDP-alpha-D-glucose = 1-O-(trans-cinnamoyl)-beta-D-glucose + UDP. UDP-glucosyltransferase that forms glucose esters with phenylpropanoids. Glucosylates 4-coumarate, ferulate, caffeate, sinapate and cinnamate. This chain is UDP-glycosyltransferase 84A4, found in Arabidopsis thaliana (Mouse-ear cress).